A 197-amino-acid chain; its full sequence is Putative RING-H2 finger protein ATL71 (197 aa).

A helical transmembrane segment spans residues 20 to 40; it reads MGGLAYGIGVSIGILMLITTI. The segment at 53–80 is disordered; sequence SASPTTTPRTRRRQRESNGTLPPGQERF. The RING-type; atypical zinc-finger motif lies at 129-171; it reads CSICLADYKKMDMIRVLPDCNHLFHDNCVDPWLRLHPTCPVCR.

The protein belongs to the RING-type zinc finger family. ATL subfamily.

It is found in the membrane. The enzyme catalyses S-ubiquitinyl-[E2 ubiquitin-conjugating enzyme]-L-cysteine + [acceptor protein]-L-lysine = [E2 ubiquitin-conjugating enzyme]-L-cysteine + N(6)-ubiquitinyl-[acceptor protein]-L-lysine.. The protein operates within protein modification; protein ubiquitination. The sequence is that of Putative RING-H2 finger protein ATL71 (ATL71) from Arabidopsis thaliana (Mouse-ear cress).